A 207-amino-acid polypeptide reads, in one-letter code: Thymidylate kinase (207 aa).

7–14 contributes to the ATP binding site; that stretch reads GCEGSGKS.

The protein belongs to the thymidylate kinase family.

It carries out the reaction dTMP + ATP = dTDP + ADP. Functionally, phosphorylation of dTMP to form dTDP in both de novo and salvage pathways of dTTP synthesis. This chain is Thymidylate kinase, found in Chlamydia caviae (strain ATCC VR-813 / DSM 19441 / 03DC25 / GPIC) (Chlamydophila caviae).